The primary structure comprises 87 residues: MDKAKKQELIATYSRKEGDTGSPEVQIALLSERINHLTSHLKEHKKDHHSRRGLFMMIGKRRSLLNYLESVDIERYRDIIKKLGLRK.

It belongs to the universal ribosomal protein uS15 family. Part of the 30S ribosomal subunit. Forms a bridge to the 50S subunit in the 70S ribosome, contacting the 23S rRNA.

Its function is as follows. One of the primary rRNA binding proteins, it binds directly to 16S rRNA where it helps nucleate assembly of the platform of the 30S subunit by binding and bridging several RNA helices of the 16S rRNA. In terms of biological role, forms an intersubunit bridge (bridge B4) with the 23S rRNA of the 50S subunit in the ribosome. This is Small ribosomal subunit protein uS15 from Clostridium acetobutylicum (strain ATCC 824 / DSM 792 / JCM 1419 / IAM 19013 / LMG 5710 / NBRC 13948 / NRRL B-527 / VKM B-1787 / 2291 / W).